We begin with the raw amino-acid sequence, 380 residues long: 8-amino-7-oxononanoate synthase (380 aa).

Arg26 provides a ligand contact to substrate. 104 to 105 (GY) contributes to the pyridoxal 5'-phosphate binding site. His129 is a substrate binding site. Pyridoxal 5'-phosphate-binding positions include Ser175, 200-203 (DEAH), and 232-235 (TLSK). At Lys235 the chain carries N6-(pyridoxal phosphate)lysine. Residue Thr345 coordinates substrate.

This sequence belongs to the class-II pyridoxal-phosphate-dependent aminotransferase family. BioF subfamily. As to quaternary structure, homodimer. The cofactor is pyridoxal 5'-phosphate.

The catalysed reaction is 6-carboxyhexanoyl-[ACP] + L-alanine + H(+) = (8S)-8-amino-7-oxononanoate + holo-[ACP] + CO2. It participates in cofactor biosynthesis; biotin biosynthesis. Its function is as follows. Catalyzes the decarboxylative condensation of pimeloyl-[acyl-carrier protein] and L-alanine to produce 8-amino-7-oxononanoate (AON), [acyl-carrier protein], and carbon dioxide. This chain is 8-amino-7-oxononanoate synthase, found in Mycolicibacterium vanbaalenii (strain DSM 7251 / JCM 13017 / BCRC 16820 / KCTC 9966 / NRRL B-24157 / PYR-1) (Mycobacterium vanbaalenii).